A 103-amino-acid polypeptide reads, in one-letter code: Large ribosomal subunit protein bL21 (103 aa).

This sequence belongs to the bacterial ribosomal protein bL21 family. As to quaternary structure, part of the 50S ribosomal subunit. Contacts protein L20.

In terms of biological role, this protein binds to 23S rRNA in the presence of protein L20. The polypeptide is Large ribosomal subunit protein bL21 (Idiomarina loihiensis (strain ATCC BAA-735 / DSM 15497 / L2-TR)).